The following is a 121-amino-acid chain: Basic phospholipase A2 homolog (121 aa).

7 disulfide bridges follow: C26/C115, C28/C44, C43/C95, C49/C121, C50/C88, C57/C81, and C75/C86.

Belongs to the phospholipase A2 family. Group II subfamily. K49 sub-subfamily. As to quaternary structure, homodimer. In terms of tissue distribution, expressed by the venom gland.

The protein resides in the secreted. Its function is as follows. Snake venom phospholipase A2 homolog that lacks enzymatic activity, but has myotoxic and cytolytic activities. The protein is Basic phospholipase A2 homolog of Metlapilcoatlus nummifer (Mexican jumping pitviper).